The following is a 445-amino-acid chain: C-terminal-binding protein 2 (445 aa).

Arginine 22 carries the post-translational modification Asymmetric dimethylarginine. NAD(+)-binding positions include serine 106, 186–191 (IGFGRT), aspartate 210, 243–249 (CNLNEHN), 270–272 (AAR), and aspartate 296. Arginine 272 is a catalytic residue. The active site involves glutamate 301. The Proton donor role is filled by histidine 321. 321-324 (HTAW) serves as a coordination point for NAD(+). The segment at 414–445 (THNLPTVAHPSQAPSPNQPTKHGDNREHPNEQ) is disordered. Serine 428 carries the post-translational modification Phosphoserine; by HIPK2. Residues 434–445 (KHGDNREHPNEQ) show a composition bias toward basic and acidic residues.

It belongs to the D-isomer specific 2-hydroxyacid dehydrogenase family. As to quaternary structure, interacts with HIPK2 and PNN. Interacts with the transcription factors ZNF217, BKLF, delta EF1/AREB6/ZEB, EVI-1 and Friend of GATA (FOG) via the consensus motif P-X-[DNS]-L-[STVA]. Also interacts with the C-terminus of adenovirus E1A protein. Can form a complex with BKLF on a CACCC-box oligonucleotide. Can form homodimers or heterodimers of CTBP1 and CTBP2. Interacts with NRIP1 and WIZ. Interacts with PRDM16; represses white adipose tissue (WAT)-specific genes expression. Interacts with MCRIP1. Phosphorylation by HIPK2 on Ser-428 induces proteasomal degradation. In terms of tissue distribution, found in all tissues except spleen and liver.

It localises to the nucleus. The protein localises to the synapse. Its function is as follows. Corepressor targeting diverse transcription regulators. Isoform 2 probably acts as a scaffold for specialized synapses. Functions in brown adipose tissue (BAT) differentiation. In Mus musculus (Mouse), this protein is C-terminal-binding protein 2 (Ctbp2).